A 118-amino-acid polypeptide reads, in one-letter code: Small ribosomal subunit protein uS13 (118 aa).

Residues 93-118 (RGLPVRGQRTKTNARTRKGPRKPIRK) form a disordered region.

It belongs to the universal ribosomal protein uS13 family. As to quaternary structure, part of the 30S ribosomal subunit. Forms a loose heterodimer with protein S19. Forms two bridges to the 50S subunit in the 70S ribosome.

Located at the top of the head of the 30S subunit, it contacts several helices of the 16S rRNA. In the 70S ribosome it contacts the 23S rRNA (bridge B1a) and protein L5 of the 50S subunit (bridge B1b), connecting the 2 subunits; these bridges are implicated in subunit movement. Contacts the tRNAs in the A and P-sites. In Azotobacter vinelandii (strain DJ / ATCC BAA-1303), this protein is Small ribosomal subunit protein uS13.